We begin with the raw amino-acid sequence, 98 residues long: Large ribosomal subunit protein bL27 (98 aa).

Residues 1–13 (MKKIWFHLDLQFF) constitute a propeptide that is removed on maturation.

It belongs to the bacterial ribosomal protein bL27 family. In terms of processing, the N-terminus is cleaved by ribosomal processing cysteine protease Prp.

This chain is Large ribosomal subunit protein bL27, found in Mycoplasmoides gallisepticum (strain R(low / passage 15 / clone 2)) (Mycoplasma gallisepticum).